The chain runs to 541 residues: Chaperonin GroEL (541 aa).

ATP contacts are provided by residues 29–32, 86–90, glycine 413, 478–480, and aspartate 494; these read TLGP, DGTTT, and DAL.

This sequence belongs to the chaperonin (HSP60) family. As to quaternary structure, forms a cylinder of 14 subunits composed of two heptameric rings stacked back-to-back. Interacts with the co-chaperonin GroES.

It is found in the cytoplasm. It carries out the reaction ATP + H2O + a folded polypeptide = ADP + phosphate + an unfolded polypeptide.. Together with its co-chaperonin GroES, plays an essential role in assisting protein folding. The GroEL-GroES system forms a nano-cage that allows encapsulation of the non-native substrate proteins and provides a physical environment optimized to promote and accelerate protein folding. In Alkaliphilus oremlandii (strain OhILAs) (Clostridium oremlandii (strain OhILAs)), this protein is Chaperonin GroEL.